The sequence spans 361 residues: Cysteine-rich with EGF-like domain protein 2-A (361 aa).

The first 24 residues, 1 to 24 (MNGSRALHLSAWLLLCLLCSAAVA), serve as a signal peptide directing secretion. The EGF-like 1 domain maps to 134–176 (DCLACLGGSERPCHGNGFCNGDGTRSGDGLCRCEAEYTGPFCL). 3 disulfides stabilise this stretch: Cys138–Cys152, Cys146–Cys164, and Cys166–Cys175. Asn188 is a glycosylation site (N-linked (GlcNAc...) asparagine). 2 FU repeats span residues 191-238 (YSLC…EESP) and 251-298 (SFLC…SEQV). Residues 288–329 (DVDECDASEQVCSRENETCLNTAGSYKCTCSEGFEDKEGNCV) enclose the EGF-like 2; calcium-binding domain. 3 cysteine pairs are disulfide-bonded: Cys292-Cys306, Cys299-Cys315, and Cys317-Cys328. An N-linked (GlcNAc...) asparagine glycan is attached at Asn303. A disordered region spans residues 341–361 (DGEMGTSASDINISNTAHEDL). Polar residues predominate over residues 346-361 (TSASDINISNTAHEDL). N-linked (GlcNAc...) asparagine glycosylation is present at Asn352.

It belongs to the CRELD family.

The protein resides in the secreted. It is found in the endoplasmic reticulum. Possible role in neuronal acetylcholine receptor transport. In Xenopus laevis (African clawed frog), this protein is Cysteine-rich with EGF-like domain protein 2-A (creld2-a).